The following is a 160-amino-acid chain: MLVILKETARKLGNVGDVLKVKKGFARNYLIPSGKAVRATRANLAILENSKEKLAAQQAAELETASELAKSFTEIDVLPIYAQAERGVLFGAVSAKQVVAELSKKGIEITTKNVVLGAPIKALGEHEVRIFLHSRVECSLKIHILDASRRGADGTITGTS.

It belongs to the bacterial ribosomal protein bL9 family.

Its function is as follows. Binds to the 23S rRNA. The sequence is that of Large ribosomal subunit protein bL9 from Neorickettsia sennetsu (strain ATCC VR-367 / Miyayama) (Ehrlichia sennetsu).